A 199-amino-acid chain; its full sequence is Neurotrophic factor BDNF precursor form (199 aa).

The segment at 1–23 is disordered; sequence GQGSLAYPGLRTQGNLETLSGPN. A propeptide spanning residues 1–100 is cleaved from the precursor; sequence GQGSLAYPGL…AANMSMRVRR (100 aa). Residues 12–23 show a composition bias toward polar residues; sequence TQGNLETLSGPN. N-linked (GlcNAc...) asparagine glycosylation is present at N93. The cysteines at positions 113 and 180 are disulfide-linked.

The protein belongs to the NGF-beta family.

It is found in the secreted. In terms of biological role, promotes the survival of neuronal populations that are all located either in the central nervous system or directly connected to it. The polypeptide is Neurotrophic factor BDNF precursor form (BDNF) (Eunectes notaeus (Yellow anaconda)).